Here is a 37-residue protein sequence, read N- to C-terminus: MIEPILLGIVLGMVVVTLAGLFVAAYRQYQRSNKIGL.

A helical membrane pass occupies residues isoleucine 5–alanine 25.

It belongs to the PetG family. The 4 large subunits of the cytochrome b6-f complex are cytochrome b6, subunit IV (17 kDa polypeptide, PetD), cytochrome f and the Rieske protein, while the 4 small subunits are PetG, PetL, PetM and PetN. The complex functions as a dimer.

It is found in the cellular thylakoid membrane. In terms of biological role, component of the cytochrome b6-f complex, which mediates electron transfer between photosystem II (PSII) and photosystem I (PSI), cyclic electron flow around PSI, and state transitions. PetG is required for either the stability or assembly of the cytochrome b6-f complex. This is Cytochrome b6-f complex subunit 5 from Synechococcus sp. (strain JA-2-3B'a(2-13)) (Cyanobacteria bacterium Yellowstone B-Prime).